A 419-amino-acid chain; its full sequence is 3-isopropylmalate dehydratase large subunit (419 aa).

Residues cysteine 301, cysteine 361, and cysteine 364 each contribute to the [4Fe-4S] cluster site.

It belongs to the aconitase/IPM isomerase family. LeuC type 2 subfamily. Heterodimer of LeuC and LeuD. [4Fe-4S] cluster serves as cofactor.

It catalyses the reaction (2R,3S)-3-isopropylmalate = (2S)-2-isopropylmalate. It participates in amino-acid biosynthesis; L-leucine biosynthesis; L-leucine from 3-methyl-2-oxobutanoate: step 2/4. Its function is as follows. Catalyzes the isomerization between 2-isopropylmalate and 3-isopropylmalate, via the formation of 2-isopropylmaleate. In Campylobacter hominis (strain ATCC BAA-381 / DSM 21671 / CCUG 45161 / LMG 19568 / NCTC 13146 / CH001A), this protein is 3-isopropylmalate dehydratase large subunit.